A 308-amino-acid polypeptide reads, in one-letter code: Transaldolase (308 aa).

Lysine 125 functions as the Schiff-base intermediate with substrate in the catalytic mechanism.

This sequence belongs to the transaldolase family. Type 1 subfamily. In terms of assembly, homodimer.

The protein localises to the cytoplasm. It carries out the reaction D-sedoheptulose 7-phosphate + D-glyceraldehyde 3-phosphate = D-erythrose 4-phosphate + beta-D-fructose 6-phosphate. The protein operates within carbohydrate degradation; pentose phosphate pathway; D-glyceraldehyde 3-phosphate and beta-D-fructose 6-phosphate from D-ribose 5-phosphate and D-xylulose 5-phosphate (non-oxidative stage): step 2/3. Transaldolase is important for the balance of metabolites in the pentose-phosphate pathway. The chain is Transaldolase from Pseudomonas putida (strain ATCC 47054 / DSM 6125 / CFBP 8728 / NCIMB 11950 / KT2440).